Reading from the N-terminus, the 201-residue chain is MARSFAQLARTAEKTKGSVAVPKEPLDHPPLQIHTLGNGVLRQSTRRIGKVDESVRDLVRDMLRSMYAAKGIGLAAPQVGIHKQLLVLDLDLETPTTPPVVLINPEIISSSATVETYEEGCLSIPGVYLNVVRPSEIVLSFRDEMGRPRKMKADGLMARCIQHEMDHLEGVLFVDRVTDENELSLELKEHGFKRADVRPLV.

The Fe cation site is built by Cys121 and His163. Residue Glu164 is part of the active site. His167 serves as a coordination point for Fe cation.

It belongs to the polypeptide deformylase family. Requires Fe(2+) as cofactor.

It catalyses the reaction N-terminal N-formyl-L-methionyl-[peptide] + H2O = N-terminal L-methionyl-[peptide] + formate. Functionally, removes the formyl group from the N-terminal Met of newly synthesized proteins. Requires at least a dipeptide for an efficient rate of reaction. N-terminal L-methionine is a prerequisite for activity but the enzyme has broad specificity at other positions. This is Peptide deformylase 2 from Prochlorococcus marinus (strain MIT 9313).